We begin with the raw amino-acid sequence, 312 residues long: Malate dehydrogenase (312 aa).

NAD(+) contacts are provided by residues 12–17 (GAGFTG) and Asp-36. Positions 87 and 93 each coordinate substrate. NAD(+) contacts are provided by residues Asn-100 and 123 to 125 (LTN). Asn-125 provides a ligand contact to substrate. Ser-149 is modified (phosphoserine). A substrate-binding site is contributed by Arg-156. His-180 acts as the Proton acceptor in catalysis.

The protein belongs to the LDH/MDH superfamily. MDH type 3 family.

It carries out the reaction (S)-malate + NAD(+) = oxaloacetate + NADH + H(+). Its function is as follows. Catalyzes the reversible oxidation of malate to oxaloacetate. The protein is Malate dehydrogenase of Bacillus cereus (strain ZK / E33L).